Consider the following 427-residue polypeptide: Gamma-glutamyl phosphate reductase (427 aa).

This sequence belongs to the gamma-glutamyl phosphate reductase family.

The protein resides in the cytoplasm. The enzyme catalyses L-glutamate 5-semialdehyde + phosphate + NADP(+) = L-glutamyl 5-phosphate + NADPH + H(+). The protein operates within amino-acid biosynthesis; L-proline biosynthesis; L-glutamate 5-semialdehyde from L-glutamate: step 2/2. Catalyzes the NADPH-dependent reduction of L-glutamate 5-phosphate into L-glutamate 5-semialdehyde and phosphate. The product spontaneously undergoes cyclization to form 1-pyrroline-5-carboxylate. This chain is Gamma-glutamyl phosphate reductase, found in Bifidobacterium adolescentis (strain ATCC 15703 / DSM 20083 / NCTC 11814 / E194a).